Consider the following 799-residue polypeptide: Ribosome-releasing factor 2, mitochondrial (799 aa).

The region spanning 19 to 306 (SKIRNIGIIA…AVVNYLPSPL (288 aa)) is the tr-type G domain. GTP is bound by residues 28–35 (AHIDAGKT), 93–97 (DTPGH), and 145–148 (NKMD).

The protein belongs to the TRAFAC class translation factor GTPase superfamily. Classic translation factor GTPase family. EF-G/EF-2 subfamily.

The protein resides in the mitochondrion. Mitochondrial GTPase that mediates the disassembly of ribosomes from messenger RNA at the termination of mitochondrial protein biosynthesis. Not involved in the GTP-dependent ribosomal translocation step during translation elongation. This Vanderwaltozyma polyspora (strain ATCC 22028 / DSM 70294 / BCRC 21397 / CBS 2163 / NBRC 10782 / NRRL Y-8283 / UCD 57-17) (Kluyveromyces polysporus) protein is Ribosome-releasing factor 2, mitochondrial.